The chain runs to 278 residues: 4-deoxy-L-threo-5-hexosulose-uronate ketol-isomerase (278 aa).

Positions 196, 198, 203, and 245 each coordinate Zn(2+).

It belongs to the KduI family. Requires Zn(2+) as cofactor.

It catalyses the reaction 5-dehydro-4-deoxy-D-glucuronate = 3-deoxy-D-glycero-2,5-hexodiulosonate. The protein operates within glycan metabolism; pectin degradation; 2-dehydro-3-deoxy-D-gluconate from pectin: step 4/5. In terms of biological role, catalyzes the isomerization of 5-dehydro-4-deoxy-D-glucuronate to 3-deoxy-D-glycero-2,5-hexodiulosonate. The protein is 4-deoxy-L-threo-5-hexosulose-uronate ketol-isomerase of Shigella sonnei (strain Ss046).